The primary structure comprises 2434 residues: MKRQKLKSWILKLEEIRSFQYLFNSWTELNLVRLFTKIVSHRERLIKLFDSRILSTLLLRDLRGSRSNQSLTIKGVVLLTLPVLIYHVNQKSMIERKKFYSMKLFPIPINYAEPRNETSEEYFESFNKNLLIFPHLFLSFPKGRKIYQSHLRNSKEDAWVLSKRKVCVMPAYNQIDSWGSRWWKNWIIEEILPSWKIPQGSIAKIEMSLKEKDVEHLKGFFEFYIDDLIRKDYDWEYHFDRVFMRNKQDTIDLSSKQQVEILGNNLICYLMSAFCEKMLFEAEGPFKQQKSKSIVESNNIKHFSHLRLSYQEKSEWGPRWWKKNMFQIWNSWGESDQIIAESSILLKEKGYLSFQNYAEFWQFYKDSFVSWEKDQQKLELSKDILKEKFIQLNDVNNDQLFSKIQNLLLDILYNFSESIFIKVNHSSQLKRSYNRSIDHFDPISENSEYGTNMNKKDEIISENQRPITWETHSERDEKDIDSEIDLTLNFTENEYWEPEKDLCERIFTNGYINKTEIEQLKERSILWDPSSSIRIERTKIKSDLSSKCLSEDSPIYWTKELFTEDKKSITENLFPKERKRFIENFTKSIRSYFFDILSIDEPCMGSSVTKKPIENFKLLKGQQDVFFRYFRGSEKNGIIDPWKIRTYFQNPSSNCAISLDPGCNMIRKNQRDINKLNCILFMNRSLSRNRFSSFCDQNKEQYIFHNNLRFKKRVLKITDQFALLITKPNQVYDNTLAPDIDYHVNQFYELNKNRFLDQIFNHKNKLKNQSLLILLNITDKENEYLDRIIEKELIQISSKKGSEIGTPLNNYRTETSNWYKLIRYKIHGHLKNAFNKLYSMNGSSRNLKDQIRTNWIENENLNNVSKDTINRHPSNWRKGQKEWFDHSILRTDKCINRNLNVYKWSNQTEYLKRCSKHLVSKQNDLKIVFDPIESCANRDSIGWSGSPNKKDYSKFSLIAENTVKIFLSKKSISHSAIFIPEFFIDKLKGMNDQLFNKLLKSIGVRIVHLKTFKPFLLDNHNLSQRSKFLIDERTVAQFFYHEMPVNRFIIDLFENEKNCMELFDNTDFSTISNDRDNWLNPVKLSNQSSSRASFYKANTLQFFDYSHHPRFNYKKRLPYYMERIHTKNHNLTYGQLFNISPIHSNLFSLSISEIRPVHLEKDTISLIKSQVSNIFLPKYLQQSGNQTFVSIYDLYKSFDLLTRLNPFVHDKIDISSIEEISTTPLTRERIANFEKTSCQPFLNRSDLEENNFDQYLKGGFSSNMGLIQTQSYRDDLLSEIFLKRKDKNQEMLHRIRDRFVKSSSTEGSKNRIENKAIDKRSTLFNFSKEERNLLPFCSPRLNERAKKQEMHRISQIESLFKKWDLFRAYTPWLLTSAWWKYLENLLLETFPEILLNSSDQLVSILHDIMHKSNLSWAISHQLWALLQCNLRTNILDKFFSLWNLCSFKEMINQKNESSVLSIWAHLRLLNAREYEYSILILFFVLGYFVLRYSFVVSSAFIELQIHLERIKDLMDPSYAIELQKLMDHPLPGLLFSMDIRDISIYFLDELIYSMRNRKFYSPIRRELNRSCFSMDISGKERELLVQFLITEKNISQFGSNLTHSHNFFKNEFDYQITEQPGLIYLIYLADTYQKDLMNHEFDQSRLTERWVFLAFCRKITSSQIFRGLNLTFYGKPFSLHLGSSLSKGILLIGPTETGRSYLVKGLAADSYVPLVRISLNKFLYDKGEYSNFLDIRSMNNVVQKMHQFNLTFELAKRMSPCIIWIPNIHELNVNYLTHFFLGLLVNHLSRDDEKDSTRNLLVIASTHIPKKVDPAPIAPNRLDRSINVRMLPIPQRQKEFPILLRSKGFDSEKELSCPKEFGSRTIGSNARDLAALANEALSISITQNKSVIGTDTIRLALYRQTWGLQSIDNQVGSGQNYEILPYKVGKAVIQNTLRRNSSMNPLSINNELWKKRFSYLSKWYLEPSIAGTTMKELTILPHILGCLAGSAARDSWFISGQNRENWIPLDRFAEHDFDLASGLLESLLVEFPWLGICRGKPDKNQITFAPQPKTRNHLNVMRKGVYSMVNKMFIYKEYELKFQQETPGAKQMDEKLVNNIVWAPRIWRLSFLRSNLFDRTKRPNELGFSYQFGLFQEEQASYCKRVRENLESLQKGPHKKGFYVHERNHSNARQKNLQHIQSQLEDISLQERFEIGIFQFSIQYQMRSKSSNKPMFFLGRRFLWDPTGFLFQDQHLVFSRREFFANEEMLRRLYITYGSIRRQEKHLFPKKSIQGAFHRYNSKFMTNSVINSWKQLPLAEKEHIEAFKRIQAIGIRLKRIQPYTPTFLYQRWLIENPQEKVDRFELLIHRQRWLETNSSLSNESFLYNTLSESYKYLSNLFLSNRMLLNQMTRTLLKNRWLFPKEIEHLIHTTKDRFHISILAGKNLSSSMKGQ.

1693–1700 lines the ATP pocket; it reads GPTETGRS.

This sequence belongs to the Ycf2 family.

The protein localises to the plastid. Its subcellular location is the chloroplast stroma. Functionally, probable ATPase of unknown function. Its presence in a non-photosynthetic plant (Epifagus virginiana) and experiments in tobacco indicate that it has an essential function which is probably not related to photosynthesis. This chain is Protein Ycf2, found in Cycas taitungensis (Prince sago).